We begin with the raw amino-acid sequence, 208 residues long: Probable GTP-binding protein EngB (208 aa).

Residues 18 to 187 (KQFEICVIGR…FALMKKVVIE (170 aa)) form the EngB-type G domain. Residues 26-33 (GRSNVGKS), 52-56 (GRTQL), 69-72 (DLPG), 135-138 (NKVD), and 166-168 (VSA) each bind GTP. Positions 33 and 54 each coordinate Mg(2+).

The protein belongs to the TRAFAC class TrmE-Era-EngA-EngB-Septin-like GTPase superfamily. EngB GTPase family. Requires Mg(2+) as cofactor.

Its function is as follows. Necessary for normal cell division and for the maintenance of normal septation. The chain is Probable GTP-binding protein EngB from Ureaplasma urealyticum serovar 10 (strain ATCC 33699 / Western).